We begin with the raw amino-acid sequence, 363 residues long: Carbamoyl phosphate synthase small chain (363 aa).

The CPSase stretch occupies residues 1-172 (MKAFLVLDNG…TKYIFGTHTG (172 aa)). L-glutamine is bound by residues Ser45, Gly224, and Gly226. The Glutamine amidotransferase type-1 domain occupies 176-362 (KLAVYDYGVK…YDLVETTKRG (187 aa)). The Nucleophile role is filled by Cys252. 5 residues coordinate L-glutamine: Leu253, Gln256, Asn294, Gly296, and Phe297. Residues His335 and Glu337 contribute to the active site.

The protein belongs to the CarA family. As to quaternary structure, composed of two chains; the small (or glutamine) chain promotes the hydrolysis of glutamine to ammonia, which is used by the large (or ammonia) chain to synthesize carbamoyl phosphate. Tetramer of heterodimers (alpha,beta)4.

The enzyme catalyses hydrogencarbonate + L-glutamine + 2 ATP + H2O = carbamoyl phosphate + L-glutamate + 2 ADP + phosphate + 2 H(+). The catalysed reaction is L-glutamine + H2O = L-glutamate + NH4(+). It functions in the pathway amino-acid biosynthesis; L-arginine biosynthesis; carbamoyl phosphate from bicarbonate: step 1/1. It participates in pyrimidine metabolism; UMP biosynthesis via de novo pathway; (S)-dihydroorotate from bicarbonate: step 1/3. In terms of biological role, small subunit of the glutamine-dependent carbamoyl phosphate synthetase (CPSase). CPSase catalyzes the formation of carbamoyl phosphate from the ammonia moiety of glutamine, carbonate, and phosphate donated by ATP, constituting the first step of 2 biosynthetic pathways, one leading to arginine and/or urea and the other to pyrimidine nucleotides. The small subunit (glutamine amidotransferase) binds and cleaves glutamine to supply the large subunit with the substrate ammonia. In Leptospira borgpetersenii serovar Hardjo-bovis (strain L550), this protein is Carbamoyl phosphate synthase small chain.